We begin with the raw amino-acid sequence, 342 residues long: Cytosolic Fe-S cluster assembly factor NBP35 (342 aa).

Positions 1 to 45 (MGPSLETPEPVEDVLANPLKQKPQLVAPEPEHCPGPESEQAGTAD) are disordered. [4Fe-4S] cluster-binding residues include Cys-33, Cys-47, Cys-50, and Cys-56. Residue 86 to 93 (GKGGVGKS) coordinates ATP. Positions 259 and 262 each coordinate [4Fe-4S] cluster.

Belongs to the Mrp/NBP35 ATP-binding proteins family. NUBP1/NBP35 subfamily. As to quaternary structure, heterotetramer of 2 NBP35 and 2 CFD1 chains. Requires [4Fe-4S] cluster as cofactor.

Its subcellular location is the cytoplasm. Component of the cytosolic iron-sulfur (Fe/S) protein assembly (CIA) machinery. Required for maturation of extramitochondrial Fe-S proteins. The NBP35-CFD1 heterotetramer forms a Fe-S scaffold complex, mediating the de novo assembly of an Fe-S cluster and its transfer to target apoproteins. This Chaetomium globosum (strain ATCC 6205 / CBS 148.51 / DSM 1962 / NBRC 6347 / NRRL 1970) (Soil fungus) protein is Cytosolic Fe-S cluster assembly factor NBP35.